Consider the following 600-residue polypeptide: Transcription factor rlmA (600 aa).

Residues 1 to 61 form the MADS-box domain; sequence MGRRKIEIKA…KKLYEFSSCD (61 aa). Disordered stretches follow at residues 71–518 and 544–600; these read YYGP…NIET and GFGR…KSKT. Positions 75-89 are enriched in basic and acidic residues; sequence PHEHKGPEDFNGKRD. Positions 151-160 are enriched in polar residues; the sequence is PQPQGASRPS. Over residues 222–242 the composition is skewed to pro residues; the sequence is QPLPPHAIPPHPMPQPVPPHH. Residues 243-260 are compositionally biased toward low complexity; the sequence is QAPQHLPQHPHPLAQQTP. Over residues 328 to 339 the composition is skewed to polar residues; sequence HQRSLSSKSRSI. Over residues 364–384 the composition is skewed to basic and acidic residues; that stretch reads PRTESADVKAEAKQNDSKEIK. Positions 386-397 are enriched in pro residues; sequence PAQPVAPPPPPR. The segment covering 440-452 has biased composition (low complexity); the sequence is RGSATADSSSSTG. Residues 453 to 468 are compositionally biased toward polar residues; it reads NQTVTPAKANPDTNHS. Positions 490-501 are enriched in pro residues; that stretch reads PPNPFARPPPPG. Over residues 503 to 515 the composition is skewed to low complexity; that stretch reads ASQNSNAYNSNNN.

This sequence belongs to the MEF2 family. In terms of assembly, interacts with hsp90. Post-translationally, phosphorylation during asexual development.

Its subcellular location is the nucleus. Transcription factor; part of cell wall integrity (CWI) signaling pathway composed of pkcA, the bck1-mkk2-mpka MAPK cascade and the downstream rlmA transcription regulator. The CWI signaling pathway regulates cell wall integrity and pyomelanin formation. CWI also controls oxidative stress response, gliotoxin production, iron adaptation and asexual development. Finally, CWI is constitutively required for A.fumigatus to cope with the temperature increase found in the mammalian lung environment, during infection. Positively regulates the phosphorylation of mpkA. Involved in tolerance to oxidative damage and transcriptional regulation of genes related to oxidative stress adaptation. Directly regulates the expression of regulators of conidiation, including flbB, flbC, brlA, abaA, and rasB, as well as genes involved in cell wall synthesis and remodeling. Specifically associates with the target fumiquinazoline (fmq) cluster genes promoters at conserved motifs (5'-TAWWWWTA-3') during conidiation to supplement mature conidia with fumiquinazoline C. Also controls the DHN-melanin production via binding the promoter of pksP. The protein is Transcription factor rlmA of Aspergillus fumigatus (strain ATCC MYA-4609 / CBS 101355 / FGSC A1100 / Af293) (Neosartorya fumigata).